Consider the following 134-residue polypeptide: Small ribosomal subunit protein uS8 (134 aa).

It belongs to the universal ribosomal protein uS8 family. Part of the 30S ribosomal subunit. Contacts proteins S5 and S12.

Functionally, one of the primary rRNA binding proteins, it binds directly to 16S rRNA central domain where it helps coordinate assembly of the platform of the 30S subunit. This chain is Small ribosomal subunit protein uS8, found in Nitratiruptor sp. (strain SB155-2).